Here is a 461-residue protein sequence, read N- to C-terminus: MQKLFRAIPAIDKLIKSPQGVDLIERFGHQAFVQEARALIENAREQIIKQQCLPAFMNEQSAIFSLIEQNLQKKRMVSSKTVFNLTGTVLHTNLGRGLWSENAITAATNAMRNNVALEFDIDEGKRSHRDIYISQLIQQLTGAEAACVVNNNAAAVLLMLATFAQGKEVIVSRGELVEIGGAFRIPDIMAQAGCKLVEVGTTNRTHLWDYRNAINENTAFLMKVHTSNYHVQGFTKSVSEEELVELAKEFDLPVISDLGSGSLTDMAVLGLPAEPMVQQKVAAGVDLVSFSCDKLLGGPQAGIIVGKKVLIDALQSHPLKRVLRCDKVILSALEATLRHYLFPEKLTDEVPTFQLLTQSIETLQNKAERLKAVLNKRLDSRYILQVEPSLAQIGSGSLPTETLASVAVTVFAEKQSDLLELEKRFKALPSPIIGRFAQQKFWLDVRSAAQFEQLLNMLEEA.

An N6-(pyridoxal phosphate)lysine modification is found at Lys-294.

Belongs to the SelA family. The cofactor is pyridoxal 5'-phosphate.

The protein resides in the cytoplasm. It carries out the reaction L-seryl-tRNA(Sec) + selenophosphate + H(+) = L-selenocysteinyl-tRNA(Sec) + phosphate. Its pathway is aminoacyl-tRNA biosynthesis; selenocysteinyl-tRNA(Sec) biosynthesis; selenocysteinyl-tRNA(Sec) from L-seryl-tRNA(Sec) (bacterial route): step 1/1. Functionally, converts seryl-tRNA(Sec) to selenocysteinyl-tRNA(Sec) required for selenoprotein biosynthesis. This is L-seryl-tRNA(Sec) selenium transferase from Actinobacillus pleuropneumoniae serotype 7 (strain AP76).